Here is a 270-residue protein sequence, read N- to C-terminus: 2-dehydro-3-deoxyphosphooctonate aldolase (270 aa).

The protein belongs to the KdsA family.

Its subcellular location is the cytoplasm. The catalysed reaction is D-arabinose 5-phosphate + phosphoenolpyruvate + H2O = 3-deoxy-alpha-D-manno-2-octulosonate-8-phosphate + phosphate. It functions in the pathway carbohydrate biosynthesis; 3-deoxy-D-manno-octulosonate biosynthesis; 3-deoxy-D-manno-octulosonate from D-ribulose 5-phosphate: step 2/3. It participates in bacterial outer membrane biogenesis; lipopolysaccharide biosynthesis. This chain is 2-dehydro-3-deoxyphosphooctonate aldolase, found in Helicobacter hepaticus (strain ATCC 51449 / 3B1).